A 260-amino-acid polypeptide reads, in one-letter code: Small ribosomal subunit protein uS2 (260 aa).

The tract at residues 225 to 260 is disordered; it reads KGQTQTEAAPNAQAAPEAAAPAEQPAEEAAAASSEG. Positions 231–260 are enriched in low complexity; that stretch reads EAAPNAQAAPEAAAPAEQPAEEAAAASSEG.

The protein belongs to the universal ribosomal protein uS2 family.

In Rhodopirellula baltica (strain DSM 10527 / NCIMB 13988 / SH1), this protein is Small ribosomal subunit protein uS2.